The following is a 572-amino-acid chain: Proline--tRNA ligase (572 aa).

Belongs to the class-II aminoacyl-tRNA synthetase family. ProS type 1 subfamily. As to quaternary structure, homodimer.

The protein resides in the cytoplasm. The enzyme catalyses tRNA(Pro) + L-proline + ATP = L-prolyl-tRNA(Pro) + AMP + diphosphate. Functionally, catalyzes the attachment of proline to tRNA(Pro) in a two-step reaction: proline is first activated by ATP to form Pro-AMP and then transferred to the acceptor end of tRNA(Pro). As ProRS can inadvertently accommodate and process non-cognate amino acids such as alanine and cysteine, to avoid such errors it has two additional distinct editing activities against alanine. One activity is designated as 'pretransfer' editing and involves the tRNA(Pro)-independent hydrolysis of activated Ala-AMP. The other activity is designated 'posttransfer' editing and involves deacylation of mischarged Ala-tRNA(Pro). The misacylated Cys-tRNA(Pro) is not edited by ProRS. This chain is Proline--tRNA ligase, found in Hydrogenovibrio crunogenus (strain DSM 25203 / XCL-2) (Thiomicrospira crunogena).